We begin with the raw amino-acid sequence, 128 residues long: Saitohin (128 aa).

The disordered stretch occupies residues 77-128 (SYSSEESSRNGAEQGRQLSIEGPFQGQNCPSHPAAALPLPMRGESQATSCQV).

Interacts with PRDX6.

It localises to the cytoplasm. It is found in the nucleus. The polypeptide is Saitohin (STH) (Gorilla gorilla gorilla (Western lowland gorilla)).